Reading from the N-terminus, the 285-residue chain is Bifunctional protein FolD (285 aa).

Residues 166–168 and Ile-232 contribute to the NADP(+) site; that span reads GAS.

The protein belongs to the tetrahydrofolate dehydrogenase/cyclohydrolase family. In terms of assembly, homodimer.

It catalyses the reaction (6R)-5,10-methylene-5,6,7,8-tetrahydrofolate + NADP(+) = (6R)-5,10-methenyltetrahydrofolate + NADPH. It carries out the reaction (6R)-5,10-methenyltetrahydrofolate + H2O = (6R)-10-formyltetrahydrofolate + H(+). It participates in one-carbon metabolism; tetrahydrofolate interconversion. In terms of biological role, catalyzes the oxidation of 5,10-methylenetetrahydrofolate to 5,10-methenyltetrahydrofolate and then the hydrolysis of 5,10-methenyltetrahydrofolate to 10-formyltetrahydrofolate. The protein is Bifunctional protein FolD of Photobacterium profundum (strain SS9).